The chain runs to 193 residues: MKHYILFFISNILIENFILVKFLGLCPFLGASSNIETAFGMSCATTFVILTSSVLLWCVNFFILLPLDLIYLRIIAYMLIVSVSVQFLEIVLRKTSPILYRLLGIFLPLITTNCTVLAIPLFSLYEHHTFLESIFYGLSASLGFALVMIIFSCIRERIVLSDIPLPFQGAPIILITVSLISITFMGFKGLIKI.

Transmembrane regions (helical) follow at residues 5 to 25, 47 to 67, 72 to 92, 102 to 122, 134 to 154, and 167 to 187; these read ILFF…FLGL, FVIL…LLPL, LRII…EIVL, LLGI…IPLF, IFYG…FSCI, and FQGA…FMGF.

The protein belongs to the NqrDE/RnfAE family. As to quaternary structure, the complex is composed of six subunits: RnfA, RnfB, RnfC, RnfD, RnfE and RnfG.

The protein localises to the cell inner membrane. Functionally, part of a membrane-bound complex that couples electron transfer with translocation of ions across the membrane. The protein is Ion-translocating oxidoreductase complex subunit A of Buchnera aphidicola subsp. Acyrthosiphon pisum (strain APS) (Acyrthosiphon pisum symbiotic bacterium).